The sequence spans 265 residues: 4-hydroxy-tetrahydrodipicolinate reductase (265 aa).

NAD(+) is bound by residues glycine 7–methionine 12 and aspartate 33. An NADP(+)-binding site is contributed by arginine 34. NAD(+)-binding positions include glycine 96 to threonine 98 and alanine 120 to methionine 123. The active-site Proton donor/acceptor is the histidine 153. Histidine 154 provides a ligand contact to (S)-2,3,4,5-tetrahydrodipicolinate. The active-site Proton donor is lysine 157. (S)-2,3,4,5-tetrahydrodipicolinate is bound at residue glycine 163–threonine 164.

Belongs to the DapB family.

The protein resides in the cytoplasm. It catalyses the reaction (S)-2,3,4,5-tetrahydrodipicolinate + NAD(+) + H2O = (2S,4S)-4-hydroxy-2,3,4,5-tetrahydrodipicolinate + NADH + H(+). The enzyme catalyses (S)-2,3,4,5-tetrahydrodipicolinate + NADP(+) + H2O = (2S,4S)-4-hydroxy-2,3,4,5-tetrahydrodipicolinate + NADPH + H(+). The protein operates within amino-acid biosynthesis; L-lysine biosynthesis via DAP pathway; (S)-tetrahydrodipicolinate from L-aspartate: step 4/4. Catalyzes the conversion of 4-hydroxy-tetrahydrodipicolinate (HTPA) to tetrahydrodipicolinate. The polypeptide is 4-hydroxy-tetrahydrodipicolinate reductase (Burkholderia ambifaria (strain ATCC BAA-244 / DSM 16087 / CCUG 44356 / LMG 19182 / AMMD) (Burkholderia cepacia (strain AMMD))).